The sequence spans 468 residues: MNFVTCHVQMRLLLQRRLVRLRESELFRPQTSLSTFKRHASQKTRPIQKCSRKYARILLLSVLVPYTGYAFYVSLATVKQIDLRNEMCQRLEENNNEVTYKGSLLKYSPLEVLGRFENPFEEYRIQTVFEFFANRVFELFERNRGGIPRDVHQMNKLMPVHKPTWGPNLVDVDPAEETALPLECKVLDELHIPTAVEENEGSKCPVYNTWLGQSCNYTVYNGLRILTDPLFSDFLIHKTLGPKRITQMPSQITEVPKPDIILVSHNHPDHLDLESLEYWSGKDSPLWIVPKGMKSYMTSNGCDNVLELSWWETLQVKKNNEIYHISATPAMHWSGRSLLDTNKSLWCSFLLTHHGNPILFHAGDTGYVKDLFVRIKERFGKGCKLALLPCGQYCPEWHQKPRHINPQEVLKIMKDLEARNVLGVHWGTFVLSGEYFLEPKEKLEMLAEWGGFKDRCYCPELGKTECFD.

The N-terminal 39 residues, 1 to 39 (MNFVTCHVQMRLLLQRRLVRLRESELFRPQTSLSTFKRH), are a transit peptide targeting the mitochondrion. Residues 54 to 76 (YARILLLSVLVPYTGYAFYVSLA) traverse the membrane as a helical segment. Zn(2+) contacts are provided by His-265, His-267, Asp-269, His-270, His-332, and His-425.

The protein belongs to the NAPE-PLD family. Zn(2+) serves as cofactor.

Its subcellular location is the mitochondrion membrane. It catalyses the reaction an N-acyl-1,2-diacyl-sn-glycero-3-phosphoethanolamine + H2O = an N-acylethanolamine + a 1,2-diacyl-sn-glycero-3-phosphate + H(+). In terms of biological role, hydrolyzes N-acyl-phosphatidylethanolamines (NAPEs) to produce N-acylethanolamines (NAEs). This Saccharomyces cerevisiae (strain ATCC 204508 / S288c) (Baker's yeast) protein is N-acyl-phosphatidylethanolamine-hydrolyzing phospholipase D, mitochondrial (FMP30).